The primary structure comprises 274 residues: NADPH-dependent 7-cyano-7-deazaguanine reductase (274 aa).

80 to 82 lines the substrate pocket; it reads VES. 82–83 provides a ligand contact to NADPH; the sequence is SK. Cysteine 181 functions as the Thioimide intermediate in the catalytic mechanism. Aspartate 188 acts as the Proton donor in catalysis. 220–221 lines the substrate pocket; sequence HE. 249 to 250 is a binding site for NADPH; that stretch reads RG.

This sequence belongs to the GTP cyclohydrolase I family. QueF type 2 subfamily. In terms of assembly, homodimer.

The protein resides in the cytoplasm. It catalyses the reaction 7-aminomethyl-7-carbaguanine + 2 NADP(+) = 7-cyano-7-deazaguanine + 2 NADPH + 3 H(+). It participates in tRNA modification; tRNA-queuosine biosynthesis. Functionally, catalyzes the NADPH-dependent reduction of 7-cyano-7-deazaguanine (preQ0) to 7-aminomethyl-7-deazaguanine (preQ1). This chain is NADPH-dependent 7-cyano-7-deazaguanine reductase, found in Burkholderia multivorans (strain ATCC 17616 / 249).